Consider the following 162-residue polypeptide: MTNGNGANPEAAPPPQLNVLAQYIKDLSFENPNAPQSLAPQGQPPQINIQINVGANALADTEFEVTLTIEGKAESGTQVMFSFELVYGGVFRLVNVPQEHLSPMLLIECPRLLFPFAREIVANSVRDGGFPPLMLDPVDFVSLYRQNMERQAAAQGAQIRPS.

This sequence belongs to the SecB family. Homotetramer, a dimer of dimers. One homotetramer interacts with 1 SecA dimer.

It is found in the cytoplasm. One of the proteins required for the normal export of preproteins out of the cell cytoplasm. It is a molecular chaperone that binds to a subset of precursor proteins, maintaining them in a translocation-competent state. It also specifically binds to its receptor SecA. The polypeptide is Protein-export protein SecB (Bradyrhizobium sp. (strain BTAi1 / ATCC BAA-1182)).